Consider the following 405-residue polypeptide: Glucose-1-phosphate adenylyltransferase (405 aa).

Alpha-D-glucose 1-phosphate-binding positions include Y96, G161, E176–K177, and S194.

The protein belongs to the bacterial/plant glucose-1-phosphate adenylyltransferase family. Homotetramer.

The catalysed reaction is alpha-D-glucose 1-phosphate + ATP + H(+) = ADP-alpha-D-glucose + diphosphate. It participates in glycan biosynthesis; glycogen biosynthesis. Functionally, involved in the biosynthesis of ADP-glucose, a building block required for the elongation reactions to produce glycogen. Catalyzes the reaction between ATP and alpha-D-glucose 1-phosphate (G1P) to produce pyrophosphate and ADP-Glc. The chain is Glucose-1-phosphate adenylyltransferase from Photobacterium profundum (strain SS9).